The chain runs to 467 residues: MSADVWSQGCERLATELPEQQFNTWIRPLPAAELVDRGDTAVATLRVPNRFKLDWIRNQYAARIESVLSDLAGKPVRLDLQLAAREAPPRPSSDAPRSNGHPQAAGQWLGAPSSSNAGAYTQASAPTPTHRLNTALTFDTLVPGRANQMARTAALHVAGAPGVMYNPLFIYGGVGLGKTHLIHAVGNALLRDKPDARILYLHAEQFITDVVKNYQRKTFDELKAKYHSLDLLLIDDVQFFAGKERTQEEFFNAFEALLAKRAHIIMTSDTYPKGLADIDERLTSRFDAGLTVAIEPPELEMRVAILMKKSDVEGTPMPEDVAFFVAKNVRANVRELEGALRKVLAYARFSQKDINIALAREALKDLLSIQNRQVGVENIQKTVADFYKIKVADMYSKKRPASIARPRQIAMYLAKELTQKSLPEIGELFGGRDHTTVLHAVRKIGGERGKNTELNQQLHVLEQTLKG.

The segment at 1–74 (MSADVWSQGC…ESVLSDLAGK (74 aa)) is domain I, interacts with DnaA modulators. Residues 74-130 (KPVRLDLQLAAREAPPRPSSDAPRSNGHPQAAGQWLGAPSSSNAGAYTQASAPTPTH) form a domain II region. The disordered stretch occupies residues 85-127 (REAPPRPSSDAPRSNGHPQAAGQWLGAPSSSNAGAYTQASAPT). A compositionally biased stretch (polar residues) spans 112–127 (PSSSNAGAYTQASAPT). The domain III, AAA+ region stretch occupies residues 131–347 (RLNTALTFDT…GALRKVLAYA (217 aa)). The ATP site is built by G175, G177, K178, and T179. The segment at 348–467 (RFSQKDINIA…LHVLEQTLKG (120 aa)) is domain IV, binds dsDNA.

Belongs to the DnaA family. As to quaternary structure, oligomerizes as a right-handed, spiral filament on DNA at oriC.

The protein localises to the cytoplasm. In terms of biological role, plays an essential role in the initiation and regulation of chromosomal replication. ATP-DnaA binds to the origin of replication (oriC) to initiate formation of the DNA replication initiation complex once per cell cycle. Binds the DnaA box (a 9 base pair repeat at the origin) and separates the double-stranded (ds)DNA. Forms a right-handed helical filament on oriC DNA; dsDNA binds to the exterior of the filament while single-stranded (ss)DNA is stabiized in the filament's interior. The ATP-DnaA-oriC complex binds and stabilizes one strand of the AT-rich DNA unwinding element (DUE), permitting loading of DNA polymerase. After initiation quickly degrades to an ADP-DnaA complex that is not apt for DNA replication. Binds acidic phospholipids. This is Chromosomal replication initiator protein DnaA from Methylibium petroleiphilum (strain ATCC BAA-1232 / LMG 22953 / PM1).